The chain runs to 737 residues: Dual specificity protein kinase KNS1 (737 aa).

Disordered regions lie at residues 1-33 (MSQN…SSNK) and 270-290 (SSLR…NKSN). Residues 15 to 33 (ANMNNSTTTGPANNTSSNK) are compositionally biased toward polar residues. Residues 277-290 (SNGSSESASSNKSN) show a composition bias toward low complexity. The region spanning 313 to 720 (FVVKDLLGQG…AKDALDHEWF (408 aa)) is the Protein kinase domain. Residues 319–327 (LGQGTFGKV) and Lys343 each bind ATP. The active-site Proton acceptor is Asp440. Thr562 bears the Phosphothreonine mark.

Belongs to the protein kinase superfamily. CMGC Ser/Thr protein kinase family. Lammer subfamily. Post-translationally, phosphorylated (auto-) on Ser/Thr/Tyr.

It carries out the reaction L-seryl-[protein] + ATP = O-phospho-L-seryl-[protein] + ADP + H(+). The enzyme catalyses L-threonyl-[protein] + ATP = O-phospho-L-threonyl-[protein] + ADP + H(+). The catalysed reaction is L-tyrosyl-[protein] + ATP = O-phospho-L-tyrosyl-[protein] + ADP + H(+). Functionally, nonessential protein kinase. This chain is Dual specificity protein kinase KNS1 (KNS1), found in Saccharomyces cerevisiae (strain ATCC 204508 / S288c) (Baker's yeast).